Here is a 900-residue protein sequence, read N- to C-terminus: Exosome complex component 10 homolog (900 aa).

Disordered stretches follow at residues methionine 1 to valine 31 and threonine 147 to proline 174. Residues valine 8 to serine 28 show a composition bias toward basic and acidic residues. A 3'-5' exonuclease domain is found at valine 273–leucine 438. Residues aspartate 296, glutamate 298, aspartate 354, and aspartate 423 each coordinate Mg(2+). In terms of domain architecture, HRDC spans aspartate 485–lysine 565. Residues glutamate 731–lysine 900 are disordered. Positions arginine 809–glycine 826 are enriched in basic residues. The segment covering asparagine 878–lysine 887 has biased composition (low complexity).

This sequence belongs to the exosome component 10/RRP6 family. Component of the RNA exosome complex. Interacts with spn-A/Rad51; the interaction is required for the recruitment of spn-A to the DNA-damage response foci. Interacts with Su(var)3-9, a heterochromatin factor; the interaction promotes association of Rrp6 with a subset of genomic loci. Interacts with Su(var)205, a heterochromatin factor. Interacts with HDAC1, a heterochromatin factor. Mg(2+) serves as cofactor. Salivary gland (at protein level).

It localises to the nucleus. It is found in the chromosome. The protein localises to the cytoplasm. Its subcellular location is the cell cortex. The protein resides in the cytoskeleton. It localises to the microtubule organizing center. It is found in the centrosome. The protein localises to the spindle. Its subcellular location is the midbody. Functionally, catalytic component of the RNA exosome complex which has 3'-&gt;5' exoribonuclease activity and participates in a multitude of cellular RNA processing and degradation events. Degrades a large variety of non-coding RNAs that are processed by the exosome, such as pre-rRNAs and some small nucleolar RNAs (snoRNAs). Degrades transcripts derived from different types of heterochromatic repeats, such as subtelomeric minisatellites and simple gagaa repeats. Degrades transcripts derived from transposons and transposon fragments. Degrades chromatin-associated transcripts and contributes to the compaction of heterochromatin. Required for the efficient repair of DNA double-strand breaks via homologous recombination after irradiation. Required for cell proliferation and error-free mitosis. The sequence is that of Exosome complex component 10 homolog from Drosophila melanogaster (Fruit fly).